The primary structure comprises 499 residues: Alpha-amylase A type-1/2 (499 aa).

An N-terminal signal peptide occupies residues 1–21; it reads MMVAWWSLFLYGLQVAAPALA. An intrachain disulfide couples C51 to C59. Residues Q56 and W104 each contribute to the substrate site. N142 lines the Ca(2+) pocket. H143 is a substrate binding site. Residues C171 and C185 are joined by a disulfide bond. Residues E183 and D196 each contribute to the Ca(2+) site. N218 is a glycosylation site (N-linked (GlcNAc...) asparagine). R225 contacts substrate. D227, H231, and E251 together coordinate Ca(2+). D227 acts as the Nucleophile in catalysis. 230–231 is a substrate binding site; that stretch reads KH. E251 acts as the Proton donor in catalysis. G255 serves as a coordination point for substrate. Residues C261 and C304 are joined by a disulfide bond. The substrate site is built by D318 and R365. The cysteines at positions 461 and 496 are disulfide-linked.

This sequence belongs to the glycosyl hydrolase 13 family. As to quaternary structure, monomer. The cofactor is Ca(2+).

The protein localises to the secreted. It catalyses the reaction Endohydrolysis of (1-&gt;4)-alpha-D-glucosidic linkages in polysaccharides containing three or more (1-&gt;4)-alpha-linked D-glucose units.. The polypeptide is Alpha-amylase A type-1/2 (amy1) (Aspergillus oryzae (strain ATCC 42149 / RIB 40) (Yellow koji mold)).